Here is a 156-residue protein sequence, read N- to C-terminus: Small ribosomal subunit protein uS7 (156 aa).

The protein belongs to the universal ribosomal protein uS7 family. Part of the 30S ribosomal subunit. Contacts proteins S9 and S11.

Functionally, one of the primary rRNA binding proteins, it binds directly to 16S rRNA where it nucleates assembly of the head domain of the 30S subunit. Is located at the subunit interface close to the decoding center, probably blocks exit of the E-site tRNA. The chain is Small ribosomal subunit protein uS7 from Synechocystis sp. (strain ATCC 27184 / PCC 6803 / Kazusa).